The following is a 300-amino-acid chain: MSNTRVHNPSASILSDFKEITKMRLAISVVFSSVAGYFLGADTIDFVTVTLLAIGGYLMVGASNAYNQIIERNLDALMDRTKNRPLPAGRMSVPVAFTIASAFTVLGLVVLYVINPKTAMFGAISIFLYVSIYTPLKTKTPLSVFVGAFPGAIPFMLGWVAASGSFSIEPGTLFMIQFFWQFPHFWAIGWWLFDDYKKGGFFMLPTGKRDRGTAIQIILYTCWTILVSLIPVFGVTGKLMLTPVSGIIIFLLGLGMLYYAIRLFKEKTAEAAKKLMFASVSYITLLQIVYVLDKFIREWI.

A run of 9 helical transmembrane segments spans residues 20-40, 43-63, 94-114, 116-136, 142-162, 173-193, 215-235, 241-261, and 276-296; these read ITKM…YFLG, TIDF…VGAS, PVAF…LYVI, PKTA…YTPL, LSVF…WVAA, LFMI…WWLF, IQII…VFGV, LTPV…YYAI, and MFAS…DKFI.

The protein belongs to the UbiA prenyltransferase family. Protoheme IX farnesyltransferase subfamily.

It localises to the cell membrane. It carries out the reaction heme b + (2E,6E)-farnesyl diphosphate + H2O = Fe(II)-heme o + diphosphate. Its pathway is porphyrin-containing compound metabolism; heme O biosynthesis; heme O from protoheme: step 1/1. Functionally, converts heme B (protoheme IX) to heme O by substitution of the vinyl group on carbon 2 of heme B porphyrin ring with a hydroxyethyl farnesyl side group. This chain is Protoheme IX farnesyltransferase, found in Christiangramia forsetii (strain DSM 17595 / CGMCC 1.15422 / KT0803) (Gramella forsetii).